Here is a 1857-residue protein sequence, read N- to C-terminus: Peripheral-type benzodiazepine receptor-associated protein 1 (1857 aa).

Disordered regions lie at residues 1–103 (MEQL…RPED), 284–321 (QRET…QEDA), and 565–629 (PKDL…DTAS). Residues 55 to 67 (LRSEESSKPKGDG) show a composition bias toward basic and acidic residues. The span at 87 to 96 (LGQQASSSGP) shows a compositional bias: polar residues. The span at 289–298 (PLPPSWPPGP) shows a compositional bias: pro residues. 2 stretches are compositionally biased toward low complexity: residues 299-316 (ALQA…GEAT) and 603-616 (SLSN…IHNS). Positions 653 to 720 (ARIQVFLARY…PSNFVERVSD (68 aa)) constitute an SH3 1 domain. The segment at 729 to 789 (PELADLSHSS…PSPEGLGEPP (61 aa)) is disordered. Over residues 755 to 764 (GGQSSVGRSQ) the composition is skewed to low complexity. Fibronectin type-III domains lie at 791–882 (VPYP…ARAG), 884–976 (VPSQ…TLPA), and 981–1081 (APLD…LAPA). 3 disordered regions span residues 1083–1311 (LPAR…SDEE), 1330–1479 (FSIP…CSRG), and 1501–1601 (YDSE…RGVR). A compositionally biased stretch (low complexity) spans 1098–1116 (ARAPLASASPGPGDPSSPL). The span at 1138–1147 (EMAKGSHEDP) shows a compositional bias: basic and acidic residues. Polar residues predominate over residues 1201 to 1218 (ASSSTQGARAQQAPNTEM). Residues 1259–1274 (DIQEEEEEEEEEEEEE) show a composition bias toward acidic residues. Residues 1278-1292 (RTCSFQKQVAGNSIR) show a composition bias toward polar residues. A compositionally biased stretch (acidic residues) spans 1333-1346 (PEEEEEEEEDEEEE). 2 stretches are compositionally biased toward basic and acidic residues: residues 1420-1429 (RPPDPREHCS) and 1554-1586 (AWEK…EARG). The SH3 2 domain maps to 1625-1693 (LPVRIFVALF…PCNMVAEVAV (69 aa)). 2 disordered regions span residues 1723 to 1761 (VYST…VPSA) and 1823 to 1857 (SNFL…RVQC). The SH3 3 domain maps to 1764–1831 (KAPHSMVAAF…PSNFLEGPGP (68 aa)).

The protein belongs to the RIMBP family. Interacts with RIMS1 and RIMS2. Interacts with TSPO. Interacts with CACNA1A. As to expression, predominantly expressed in brain, pituitary gland and thymus in adults. In adult brain, highest expression found in temporal lobe and the putamen, followed by amygdala, caudate nucleus, cerebral cortex, occipital and frontal lobe. A high expression level is also observed in fetal tissues like brain, heart, kidney and thymus.

The protein localises to the cytoplasm. It is found in the mitochondrion. In terms of biological role, required for synaptic transmission regulation. It probably controls the recruitement of voltage-gated calcium channels to the presynaptic membrane, and modulates neurotransmitter release. This is Peripheral-type benzodiazepine receptor-associated protein 1 from Homo sapiens (Human).